A 342-amino-acid polypeptide reads, in one-letter code: Succinylglutamate desuccinylase (342 aa).

The Zn(2+) site is built by His63, Glu66, and His155. The active site involves Glu219.

It belongs to the AspA/AstE family. Succinylglutamate desuccinylase subfamily. Zn(2+) serves as cofactor.

The catalysed reaction is N-succinyl-L-glutamate + H2O = L-glutamate + succinate. The protein operates within amino-acid degradation; L-arginine degradation via AST pathway; L-glutamate and succinate from L-arginine: step 5/5. Transforms N(2)-succinylglutamate into succinate and glutamate. The sequence is that of Succinylglutamate desuccinylase from Vibrio vulnificus (strain YJ016).